Here is a 303-residue protein sequence, read N- to C-terminus: Oxygen-dependent coproporphyrinogen-III oxidase (303 aa).

Serine 93 serves as a coordination point for substrate. A divalent metal cation is bound by residues histidine 97 and histidine 107. Histidine 107 acts as the Proton donor in catalysis. A substrate-binding site is contributed by 109–111 (NVR). Residues histidine 149 and histidine 179 each coordinate a divalent metal cation. Residues 244-279 (YVEFNLVFDRGTLFGLQSGGRTESILLSMPPLAQWR) are important for dimerization. 262 to 264 (GGR) lines the substrate pocket.

Belongs to the aerobic coproporphyrinogen-III oxidase family. In terms of assembly, homodimer. It depends on a divalent metal cation as a cofactor.

It localises to the cytoplasm. The enzyme catalyses coproporphyrinogen III + O2 + 2 H(+) = protoporphyrinogen IX + 2 CO2 + 2 H2O. The protein operates within porphyrin-containing compound metabolism; protoporphyrin-IX biosynthesis; protoporphyrinogen-IX from coproporphyrinogen-III (O2 route): step 1/1. In terms of biological role, involved in the heme biosynthesis. Catalyzes the aerobic oxidative decarboxylation of propionate groups of rings A and B of coproporphyrinogen-III to yield the vinyl groups in protoporphyrinogen-IX. The protein is Oxygen-dependent coproporphyrinogen-III oxidase of Bordetella pertussis (strain Tohama I / ATCC BAA-589 / NCTC 13251).